Here is a 615-residue protein sequence, read N- to C-terminus: RNA polymerase sigma factor RpoD (615 aa).

The interval 177–215 (APTATHVGSELSQEDLDDDEDEDEEDGDDDAADDDNSID) is disordered. Over residues 188–214 (SQEDLDDDEDEDEEDGDDDAADDDNSI) the composition is skewed to acidic residues. A sigma-70 factor domain-2 region spans residues 381-451 (MVEANLRLVI…TRSIADQART (71 aa)). The Interaction with polymerase core subunit RpoC signature appears at 405-408 (DLIQ). A sigma-70 factor domain-3 region spans residues 460-536 (ETINKLNRIS…DTTLELPLDS (77 aa)). Residues 549–602 (VLAGLTAREAKVLRMRFGIDMNTDHTLEEVGKQFDVTRERIRQIEAKALRKLRH) form a sigma-70 factor domain-4 region. The H-T-H motif DNA-binding region spans 575–594 (LEEVGKQFDVTRERIRQIEA).

Belongs to the sigma-70 factor family. RpoD/SigA subfamily. Interacts transiently with the RNA polymerase catalytic core.

Its subcellular location is the cytoplasm. In terms of biological role, sigma factors are initiation factors that promote the attachment of RNA polymerase to specific initiation sites and are then released. This sigma factor is the primary sigma factor during exponential growth. The polypeptide is RNA polymerase sigma factor RpoD (Salmonella typhi).